The sequence spans 202 residues: MPIGVPKVPFRSPGEEDAAWVDIYNRLHRERLLFLGQELDSEISNQLVGLMVYLSIEDKTRDFFLFINSPGGWVIPGIGLYDTMQFVPPDVHTICMGLAASMGSFILVGGEITKRLAFPHARVMIHQPASSFYEAQAGEFVLEAEELLKLRETLTRVYVQRTGKPLWVVSEDMERDVFLSATEAQAHGIVDLVGDENMGDLV.

Ser-101 acts as the Nucleophile in catalysis. The active site involves His-126.

This sequence belongs to the peptidase S14 family. Component of the chloroplastic Clp protease core complex.

The protein localises to the plastid. It is found in the chloroplast stroma. The catalysed reaction is Hydrolysis of proteins to small peptides in the presence of ATP and magnesium. alpha-casein is the usual test substrate. In the absence of ATP, only oligopeptides shorter than five residues are hydrolyzed (such as succinyl-Leu-Tyr-|-NHMec, and Leu-Tyr-Leu-|-Tyr-Trp, in which cleavage of the -Tyr-|-Leu- and -Tyr-|-Trp bonds also occurs).. Its function is as follows. Cleaves peptides in various proteins in a process that requires ATP hydrolysis. Has a chymotrypsin-like activity. Plays a major role in the degradation of misfolded proteins. In Acorus calamus (Sweet flag), this protein is ATP-dependent Clp protease proteolytic subunit.